We begin with the raw amino-acid sequence, 678 residues long: Mitogen-activated protein kinase kinase kinase 7 (678 aa).

One can recognise a Protein kinase domain in the interval isoleucine 19 to valine 271. ATP-binding positions include valine 25 to valine 33 and lysine 46. Aspartate 140 (proton acceptor) is an active-site residue. Disordered regions lie at residues aspartate 296–proline 322, threonine 339–asparagine 365, aspartate 431–threonine 455, and glutamine 616–glutamine 647. Low complexity-rich tracts occupy residues leucine 313–proline 322 and threonine 339–serine 352. The segment covering aspartate 353–asparagine 364 has biased composition (polar residues).

It belongs to the protein kinase superfamily. STE Ser/Thr protein kinase family. MAP kinase kinase kinase subfamily. Mg(2+) serves as cofactor.

It carries out the reaction L-seryl-[protein] + ATP = O-phospho-L-seryl-[protein] + ADP + H(+). It catalyses the reaction L-threonyl-[protein] + ATP = O-phospho-L-threonyl-[protein] + ADP + H(+). Its function is as follows. Component of a protein kinase signal transduction cascade. Mediator of TGF-beta signal transduction. Responsible for activation of the JNK MAPK pathway (basket, bsk and hemipterous, hep) in response to LPS. Component of the NF-kappa-B pathway; relish-mediated JNK inhibition involves proteasomal degradation of Tak1; certain targets of Relish that are induced during immune responses may facilitate destruction of Tak1 and switch off the JNK cascade. Participates in diverse roles such as control of cell shape and regulation of apoptosis. The sequence is that of Mitogen-activated protein kinase kinase kinase 7 (Tak1) from Drosophila melanogaster (Fruit fly).